Consider the following 389-residue polypeptide: Liposome tubulation protein MamY (389 aa).

Residues 1 to 31 (MAIAAIMGDVLMLMGFNKAAFGKLNSASRAA) are Cytoplasmic-facing. A helical transmembrane segment spans residues 32 to 52 (LIGAVIWAVLSIVYLTIFNGW). At 53-62 (KNLFTMLPHE) the chain is on the lumenal side. The helical transmembrane segment at 63 to 83 (FFIVLLSIALPIGLTVLILML) threads the bilayer. Topologically, residues 84-389 (SRIVKSVDTL…TETAPDSGMD (306 aa)) are cytoplasmic.

This sequence belongs to the magnetosome MamY family.

Its subcellular location is the magnetosome membrane. Causes tubulation when added to magnetosome-derived liposomes, binds liposomes; may be involved in constriction of the cell inner membrane to form mature magnetosomes. Binds preferentially to cardiolipin, a component of bacterial membranes, with very poor to no binding of other tested (phospho)lipids. Addition of cardiolipin to magnetosome-derived lipids increases tubulation. May function with MamX, MamZ amd Mms6. The polypeptide is Liposome tubulation protein MamY (Paramagnetospirillum magneticum (strain ATCC 700264 / AMB-1) (Magnetospirillum magneticum)).